The primary structure comprises 332 residues: Glycerol-3-phosphate dehydrogenase [NAD(P)+] (332 aa).

Residues tryptophan 15, arginine 35, and lysine 108 each coordinate NADPH. Sn-glycerol 3-phosphate-binding residues include lysine 108, glycine 137, and serine 139. Alanine 141 contacts NADPH. 5 residues coordinate sn-glycerol 3-phosphate: lysine 192, aspartate 245, serine 255, arginine 256, and asparagine 257. Catalysis depends on lysine 192, which acts as the Proton acceptor. Arginine 256 provides a ligand contact to NADPH. NADPH-binding residues include leucine 278 and glutamate 280.

It belongs to the NAD-dependent glycerol-3-phosphate dehydrogenase family.

It localises to the cytoplasm. It catalyses the reaction sn-glycerol 3-phosphate + NAD(+) = dihydroxyacetone phosphate + NADH + H(+). The catalysed reaction is sn-glycerol 3-phosphate + NADP(+) = dihydroxyacetone phosphate + NADPH + H(+). The protein operates within membrane lipid metabolism; glycerophospholipid metabolism. Its function is as follows. Catalyzes the reduction of the glycolytic intermediate dihydroxyacetone phosphate (DHAP) to sn-glycerol 3-phosphate (G3P), the key precursor for phospholipid synthesis. This is Glycerol-3-phosphate dehydrogenase [NAD(P)+] from Methylobacterium radiotolerans (strain ATCC 27329 / DSM 1819 / JCM 2831 / NBRC 15690 / NCIMB 10815 / 0-1).